A 91-amino-acid chain; its full sequence is Small ribosomal subunit protein uS19 (91 aa).

Belongs to the universal ribosomal protein uS19 family.

Its function is as follows. Protein S19 forms a complex with S13 that binds strongly to the 16S ribosomal RNA. The protein is Small ribosomal subunit protein uS19 of Bordetella avium (strain 197N).